A 270-amino-acid polypeptide reads, in one-letter code: A-type potassium channel modulatory protein KCNIP2 (270 aa).

The span at 1 to 17 (MRGQGRKESLSDSRDLD) shows a compositional bias: basic and acidic residues. A disordered region spans residues 1–32 (MRGQGRKESLSDSRDLDGSYDQLTGHPPGPTK). The residue at position 9 (serine 9) is a Phosphoserine. 2 S-palmitoyl cysteine lipidation sites follow: cysteine 45 and cysteine 46. Residues 81–137 (FELSTVCHRPEGLEQLQEQTKFTRKELQVLYRGFKNECPSGIVNEENFKQIYSQFFP) enclose the EF-hand 1; degenerate domain. 3 EF-hand domains span residues 140 to 175 (DSST…ILRG), 176 to 211 (TVDD…IYDM), and 224 to 259 (APRE…DENI). The Ca(2+) site is built by aspartate 153, asparagine 155, aspartate 157, serine 159, aspartate 164, aspartate 189, asparagine 191, aspartate 193, cysteine 195, glutamate 200, aspartate 237, asparagine 239, aspartate 241, and glutamate 248. The interval 257–270 (ENIMRSMQLFDNVI) is interaction with KCND2.

This sequence belongs to the recoverin family. In terms of assembly, component of heteromultimeric potassium channels. Identified in potassium channel complexes containing KCND1, KCND2, KCND3, KCNIP1, KCNIP2, KCNIP3, KCNIP4, DPP6 and DPP10. The KCND2-KCNIP2 channel complex contains four KCND2 and four KCNIP2 subunits. Interacts with KCND2. Probably part of a complex consisting of KCNIP1, KCNIP2 isoform 3 and KCND2. At least isoform 2 and isoform 3 can self-associate to form homodimers and homotetramers. Isoform 3 interacts with KCNIP1 in a calcium-dependent manner. Interacts with KCND3; each KCNIP2 monomer interacts with two adjacent KCND3 subunits, through both the N-terminal inactivation ball of a KCND3 subunit and a C-terminal helix from the adjacent KCND3 subunit, clamping them together; this interaction modulates the channel gating kinetics. In terms of processing, palmitoylated. Palmitoylation enhances association with the plasma membrane. In terms of tissue distribution, expressed in brain. Colocalizes with KCND2 in excitatory neurons including cortical and hippocampal CA1 pyramidal cells. Isoform 3 is expressed in heart and in umbilical vein endothelial cells. Not expressed in fetal heart.

The protein localises to the cell membrane. Functionally, regulatory subunit of Kv4/D (Shal)-type voltage-gated rapidly inactivating A-type potassium channels. Modulates channel density, inactivation kinetics and rate of recovery from inactivation in a calcium-dependent and isoform-specific manner. Involved in KCND2 and KCND3 trafficking to the cell surface. May be required for the expression of I(To) currents in the heart. The polypeptide is A-type potassium channel modulatory protein KCNIP2 (Homo sapiens (Human)).